Consider the following 91-residue polypeptide: MFCVIYRSAKRDQTYLYVEKRDDFSRVPEELMKGFGTPQLAMLLPLDGRKQLVNADLEKVKTALKDQGYYLQLPPPPENLLKQHLEGEGKN.

A YcgL domain is found at 1–85; that stretch reads MFCVIYRSAK…PPENLLKQHL (85 aa).

The chain is YcgL domain-containing protein Ent638_2370 from Enterobacter sp. (strain 638).